The primary structure comprises 883 residues: Phosphoenolpyruvate carboxylase (883 aa).

Catalysis depends on residues histidine 138 and lysine 546.

The protein belongs to the PEPCase type 1 family. Requires Mg(2+) as cofactor.

It catalyses the reaction oxaloacetate + phosphate = phosphoenolpyruvate + hydrogencarbonate. Functionally, forms oxaloacetate, a four-carbon dicarboxylic acid source for the tricarboxylic acid cycle. The sequence is that of Phosphoenolpyruvate carboxylase from Salmonella gallinarum (strain 287/91 / NCTC 13346).